A 209-amino-acid chain; its full sequence is Uracil phosphoribosyltransferase (209 aa).

Residues Arg-79, Arg-104, and 131 to 139 each bind 5-phospho-alpha-D-ribose 1-diphosphate; that span reads DPMLATGGS. Residues Ile-194 and 199 to 201 contribute to the uracil site; that span reads GDA. Asp-200 lines the 5-phospho-alpha-D-ribose 1-diphosphate pocket.

The protein belongs to the UPRTase family. The cofactor is Mg(2+).

The enzyme catalyses UMP + diphosphate = 5-phospho-alpha-D-ribose 1-diphosphate + uracil. It participates in pyrimidine metabolism; UMP biosynthesis via salvage pathway; UMP from uracil: step 1/1. With respect to regulation, allosterically activated by GTP. Functionally, catalyzes the conversion of uracil and 5-phospho-alpha-D-ribose 1-diphosphate (PRPP) to UMP and diphosphate. This chain is Uracil phosphoribosyltransferase, found in Lactobacillus delbrueckii subsp. bulgaricus (strain ATCC 11842 / DSM 20081 / BCRC 10696 / JCM 1002 / NBRC 13953 / NCIMB 11778 / NCTC 12712 / WDCM 00102 / Lb 14).